The sequence spans 482 residues: MVYLKNILIFLIIFLINPLVKKNKKSTKENDLKGPIALPIIGNLFGLRNDTYSIMDFYHKMYGGIYRLWFGDYFVVSLNDPEIIREIFIKNYSNFSSRPFLPTITFGSFNYRGISGSNGDYWKRNRNLLLNAMKKSNLKQTYDNLSDSVNSLINLMKEFQSSNESFQPDMYLRKYALTTMFKYVFNETVSFENKIVQGEEAELIDNINEAFNFMTLGNAGDFFKILQPLYYQYLLYRGGCFNRIRTLIRNRYIEHRKTIDIENPRDLLDLLIIEYGDHSDENMISIVQVCFDVILAGVDTLASSLEWFLVMLCNNQQIQDTVYNELKETVVGPVVTLNDRPSTPYTMACIKETIRLKAPAPFGLPHTTDQDIIVKGHFIPKDSMVLINFYSLGRNPKDFPDPLKFDPNRFIGSTPDSFMPFGTGPRNCIGQALGMDQIYLLLSNIFLNFKITSENGKKLDDTDYVSGLNLKPAKYKVCLEKR.

A helical membrane pass occupies residues 1–21; the sequence is MVYLKNILIFLIIFLINPLVK. C428 contributes to the heme binding site.

Belongs to the cytochrome P450 family. Heme serves as cofactor.

It is found in the membrane. The polypeptide is Probable cytochrome P450 508D1 (cyp508D1) (Dictyostelium discoideum (Social amoeba)).